Reading from the N-terminus, the 591-residue chain is Aspartate--tRNA ligase (591 aa).

E176 is an L-aspartate binding site. Residues 200–203 (QILK) form an aspartate region. R222 serves as a coordination point for L-aspartate. ATP contacts are provided by residues 222-224 (RDE) and Q231. H450 serves as a coordination point for L-aspartate. Residue E484 coordinates ATP. R491 contacts L-aspartate. 536 to 539 (GLDR) provides a ligand contact to ATP.

This sequence belongs to the class-II aminoacyl-tRNA synthetase family. Type 1 subfamily. Homodimer.

The protein resides in the cytoplasm. It catalyses the reaction tRNA(Asp) + L-aspartate + ATP = L-aspartyl-tRNA(Asp) + AMP + diphosphate. Functionally, catalyzes the attachment of L-aspartate to tRNA(Asp) in a two-step reaction: L-aspartate is first activated by ATP to form Asp-AMP and then transferred to the acceptor end of tRNA(Asp). The chain is Aspartate--tRNA ligase from Listeria monocytogenes serovar 1/2a (strain ATCC BAA-679 / EGD-e).